We begin with the raw amino-acid sequence, 131 residues long: Small ribosomal subunit protein uS8 (131 aa).

This sequence belongs to the universal ribosomal protein uS8 family. As to quaternary structure, part of the 30S ribosomal subunit. Contacts proteins S5 and S12.

One of the primary rRNA binding proteins, it binds directly to 16S rRNA central domain where it helps coordinate assembly of the platform of the 30S subunit. The polypeptide is Small ribosomal subunit protein uS8 (Acholeplasma laidlawii (strain PG-8A)).